Reading from the N-terminus, the 163-residue chain is Arginine repressor (163 aa).

The protein belongs to the ArgR family.

The protein localises to the cytoplasm. It participates in amino-acid biosynthesis; L-arginine biosynthesis [regulation]. In terms of biological role, regulates arginine biosynthesis genes. The chain is Arginine repressor from Anaeromyxobacter dehalogenans (strain 2CP-C).